The sequence spans 454 residues: tRNA modification GTPase MnmE (454 aa).

Residues Arg-23, Glu-80, and Lys-120 each coordinate (6S)-5-formyl-5,6,7,8-tetrahydrofolate. Residues 216-377 (GMKVVIAGRP…LRDHLKQSMG (162 aa)) enclose the TrmE-type G domain. Asn-226 contributes to the K(+) binding site. Residues 226 to 231 (NAGKSS), 245 to 251 (TDIAGTT), 270 to 273 (DTAG), 335 to 338 (NKAD), and 358 to 360 (SAR) contribute to the GTP site. A Mg(2+)-binding site is contributed by Ser-230. K(+)-binding residues include Thr-245, Ile-247, and Thr-250. Thr-251 lines the Mg(2+) pocket. Lys-454 lines the (6S)-5-formyl-5,6,7,8-tetrahydrofolate pocket.

It belongs to the TRAFAC class TrmE-Era-EngA-EngB-Septin-like GTPase superfamily. TrmE GTPase family. Homodimer. Heterotetramer of two MnmE and two MnmG subunits. K(+) serves as cofactor.

The protein resides in the cytoplasm. Functionally, exhibits a very high intrinsic GTPase hydrolysis rate. Involved in the addition of a carboxymethylaminomethyl (cmnm) group at the wobble position (U34) of certain tRNAs, forming tRNA-cmnm(5)s(2)U34. The polypeptide is tRNA modification GTPase MnmE (Yersinia pseudotuberculosis serotype O:1b (strain IP 31758)).